We begin with the raw amino-acid sequence, 499 residues long: Glutelin type-B 1 (499 aa).

The first 24 residues, 1–24, serve as a signal peptide directing secretion; it reads MASSVFSRFSIYFCVLLLCHGSMA. Cystine bridges form between Cys45–Cys78 and Cys121–Cys309. Cupin type-1 domains lie at 50-247 and 315-464; these read LQAF…VAAK and VNIE…EQAR. The interval 467 to 499 is disordered; it reads KNNRGEEHGAFTPRFQQQYYPGLSNESESETSE.

This sequence belongs to the 11S seed storage protein (globulins) family. Hexamer; each subunit is composed of an acidic and a basic chain derived from a single precursor and linked by a disulfide bond.

In terms of biological role, seed storage protein. This Oryza sativa subsp. japonica (Rice) protein is Glutelin type-B 1 (GluB1-A).